The chain runs to 459 residues: Light-independent protochlorophyllide reductase subunit N (459 aa).

[4Fe-4S] cluster-binding residues include cysteine 22, cysteine 47, and cysteine 107.

It belongs to the BchN/ChlN family. Protochlorophyllide reductase is composed of three subunits; ChlL, ChlN and ChlB. Forms a heterotetramer of two ChlB and two ChlN subunits. [4Fe-4S] cluster is required as a cofactor.

The protein localises to the plastid. Its subcellular location is the chloroplast. It carries out the reaction chlorophyllide a + oxidized 2[4Fe-4S]-[ferredoxin] + 2 ADP + 2 phosphate = protochlorophyllide a + reduced 2[4Fe-4S]-[ferredoxin] + 2 ATP + 2 H2O. The protein operates within porphyrin-containing compound metabolism; chlorophyll biosynthesis (light-independent). In terms of biological role, component of the dark-operative protochlorophyllide reductase (DPOR) that uses Mg-ATP and reduced ferredoxin to reduce ring D of protochlorophyllide (Pchlide) to form chlorophyllide a (Chlide). This reaction is light-independent. The NB-protein (ChlN-ChlB) is the catalytic component of the complex. This is Light-independent protochlorophyllide reductase subunit N from Pinus contorta (Shore pine).